A 261-amino-acid chain; its full sequence is Mannose-specific lectin 2 (261 aa).

The N-terminal stretch at 1–23 (MAKLLLFLLPAILGLLIPRSAVA) is a signal peptide. 2 consecutive Bulb-type lectin domains span residues 26–131 (TNYL…PWVP) and 145–252 (DNLL…SKRS). Beta-D-mannose-binding positions include 51-55 (QNDCN), Tyr-59, Trp-63, Gln-64, 170-174 (QGDCN), Tyr-178, and 182-185 (YGWQ). Positions 51 to 59 (QNDCNLVLY) match the Carbohydrate-binding motif 1 motif. 2 cysteine pairs are disulfide-bonded: Cys-54–Cys-74 and Cys-173–Cys-195. The Carbohydrate-binding motif 2 motif lies at 170–178 (QGDCNLVLY).

As to quaternary structure, forms heterotetramer of 2 chains 1 and 2 chains 2 arranged as a dimer of chain 1 and chain 2 heterodimers.

Functionally, mannose-specific lectin. Shows agglutinating activity towards erythrocytes from rabbit. This chain is Mannose-specific lectin 2, found in Colocasia esculenta (Wild taro).